We begin with the raw amino-acid sequence, 199 residues long: UPF0637 protein LVIS_1261 (199 aa).

It belongs to the UPF0637 family.

The chain is UPF0637 protein LVIS_1261 from Levilactobacillus brevis (strain ATCC 367 / BCRC 12310 / CIP 105137 / JCM 1170 / LMG 11437 / NCIMB 947 / NCTC 947) (Lactobacillus brevis).